Reading from the N-terminus, the 393-residue chain is S-adenosylmethionine synthase 2 (393 aa).

Residue Glu9 coordinates Mg(2+). His15 is a binding site for ATP. A K(+)-binding site is contributed by Glu43. Glu56 and Gln99 together coordinate L-methionine. Residues 167–169 (DGK), 235–238 (SGRF), Asp246, 252–253 (RK), Ala269, Lys273, and Lys277 contribute to the ATP site. An L-methionine-binding site is contributed by Asp246. Lys277 contributes to the L-methionine binding site.

This sequence belongs to the AdoMet synthase family. In terms of assembly, homotetramer. Mn(2+) is required as a cofactor. The cofactor is Mg(2+). Co(2+) serves as cofactor. It depends on K(+) as a cofactor.

The protein resides in the cytoplasm. The enzyme catalyses L-methionine + ATP + H2O = S-adenosyl-L-methionine + phosphate + diphosphate. It participates in amino-acid biosynthesis; S-adenosyl-L-methionine biosynthesis; S-adenosyl-L-methionine from L-methionine: step 1/1. Catalyzes the formation of S-adenosylmethionine from methionine and ATP. The reaction comprises two steps that are both catalyzed by the same enzyme: formation of S-adenosylmethionine (AdoMet) and triphosphate, and subsequent hydrolysis of the triphosphate. This chain is S-adenosylmethionine synthase 2 (METK2), found in Vitis vinifera (Grape).